Consider the following 778-residue polypeptide: Serine/threonine-protein kinase BRSK1 (778 aa).

Over residues 1–12 the composition is skewed to gly residues; that stretch reads MSSGSKEGGGGS. The tract at residues 1 to 29 is disordered; sequence MSSGSKEGGGGSPAYHLPHPHPHPPQHAQ. In terms of domain architecture, Protein kinase spans 34-285; the sequence is YRLEKTLGKG…LEQIQKHPWY (252 aa). ATP is bound by residues 40–48 and K63; that span reads LGKGQTGLV. The Proton acceptor role is filled by D156. T189 carries the post-translational modification Phosphothreonine; by LKB1. Residue S193 is modified to Phosphoserine. Positions 314–356 constitute a UBA domain; sequence ELDPDVLESMASLGCFRDRERLHRELRSEEENQEKMIYYLLLD. A compositionally biased stretch (basic and acidic residues) spans 362-383; the sequence is PSCEDQDLPPRNDVDPPRKRVD. A disordered region spans residues 362–548; the sequence is PSCEDQDLPP…SPGGGVGGAA (187 aa). S399, S443, S447, and S450 each carry phosphoserine. Positions 430–457 are enriched in low complexity; it reads SRSVSGASTGLSSSPLSSPRSPVFSFSP. Omega-N-methylarginine is present on residues R466, R481, R484, and R498. Positions 491–508 are enriched in pro residues; that stretch reads QPPPPSARSTPLPGPPGS. S508 is subject to Phosphoserine. Positions 509–533 are enriched in low complexity; the sequence is PRSSGGTPLHSPLHTPRASPTGTPG. R525 is subject to Omega-N-methylarginine. 2 positions are modified to phosphothreonine: T529 and T535. R550 carries the post-translational modification Omega-N-methylarginine. A Phosphothreonine modification is found at T583. A phosphoserine mark is found at S586, S587, and S601. The disordered stretch occupies residues 719 to 778; it reads QPSVQALADEKNGAQTRPAGTPPRSLQPPPGRPDPDLSSSPRRGPSKDKKLLATNGTPLP.

Belongs to the protein kinase superfamily. CAMK Ser/Thr protein kinase family. SNF1 subfamily. The cofactor is Mg(2+). Phosphorylated at Thr-189 by STK11/LKB1 in complex with STE20-related adapter-alpha (STRADA) pseudo kinase and CAB39. Not phosphorylated at Thr-189 by CaMKK2. In contrast, it is phosphorylated and activated by CaMKK1. May be inactivated via dephosphorylation of Thr-189 by PP2C. May be autophosphorylated. Mainly present in brain. Present in presynaptic nerve terminals (at protein level).

Its subcellular location is the cytoplasm. The protein resides in the nucleus. It is found in the cytoskeleton. It localises to the microtubule organizing center. The protein localises to the centrosome. Its subcellular location is the synapse. The protein resides in the presynaptic active zone. It is found in the cytoplasmic vesicle. It localises to the secretory vesicle. The protein localises to the synaptic vesicle. The enzyme catalyses L-seryl-[protein] + ATP = O-phospho-L-seryl-[protein] + ADP + H(+). The catalysed reaction is L-threonyl-[protein] + ATP = O-phospho-L-threonyl-[protein] + ADP + H(+). It catalyses the reaction L-seryl-[tau protein] + ATP = O-phospho-L-seryl-[tau protein] + ADP + H(+). It carries out the reaction L-threonyl-[tau protein] + ATP = O-phospho-L-threonyl-[tau protein] + ADP + H(+). Activated by phosphorylation on Thr-189 by STK11/LKB1. Serine/threonine-protein kinase that plays a key role in polarization of neurons and centrosome duplication. Phosphorylates CDC25B, CDC25C, MAPT/TAU, RIMS1, TUBG1, TUBG2 and WEE1. Following phosphorylation and activation by STK11/LKB1, acts as a key regulator of polarization of cortical neurons, probably by mediating phosphorylation of microtubule-associated proteins such as MAPT/TAU at 'Thr-523' and 'Ser-573'. Also regulates neuron polarization by mediating phosphorylation of WEE1 at 'Ser-642' in postmitotic neurons, leading to down-regulate WEE1 activity in polarized neurons. Also acts as a positive regulator of centrosome duplication by mediating phosphorylation of gamma-tubulin (TUBG1 and TUBG2) at 'Ser-131', leading to translocation of gamma-tubulin and its associated proteins to the centrosome. Involved in the UV-induced DNA damage checkpoint response, probably by inhibiting CDK1 activity through phosphorylation and activation of WEE1, and inhibition of CDC25B and CDC25C. In neurons, localizes to synaptic vesicles and plays a role in neurotransmitter release, possibly by phosphorylating RIMS1. This chain is Serine/threonine-protein kinase BRSK1 (Brsk1), found in Rattus norvegicus (Rat).